The sequence spans 890 residues: Translation initiation factor IF-2 (890 aa).

The tract at residues 45-304 (LIDHLNQKNS…LQQGFQKPAQ (260 aa)) is disordered. Polar residues predominate over residues 67 to 81 (STLNIPGTGGKSKSV). Positions 92-217 (VKRDPQEAER…RMAEENKWTD (126 aa)) are enriched in basic and acidic residues. Over residues 252 to 266 (GRGRNAKAARPKKGN) the composition is skewed to basic residues. A compositionally biased stretch (basic and acidic residues) spans 267–280 (KHAESKADREEARA). The tr-type G domain occupies 389–558 (PRAPVVTIMG…LLQAEVLELK (170 aa)). Residues 398–405 (GHVDHGKT) form a G1 region. 398 to 405 (GHVDHGKT) lines the GTP pocket. The G2 stretch occupies residues 423–427 (GITQH). The G3 stretch occupies residues 444-447 (DTPG). GTP-binding positions include 444-448 (DTPGH) and 498-501 (NKID). The G4 stretch occupies residues 498–501 (NKID). Positions 534–536 (SAK) are G5. N6-acetyllysine is present on lysine 808.

It belongs to the TRAFAC class translation factor GTPase superfamily. Classic translation factor GTPase family. IF-2 subfamily.

It localises to the cytoplasm. In terms of biological role, one of the essential components for the initiation of protein synthesis. Protects formylmethionyl-tRNA from spontaneous hydrolysis and promotes its binding to the 30S ribosomal subunits. Also involved in the hydrolysis of GTP during the formation of the 70S ribosomal complex. The protein is Translation initiation factor IF-2 of Escherichia coli (strain 55989 / EAEC).